The primary structure comprises 349 residues: Hydrophobic dipeptide epimerase (349 aa).

Residues threonine 127 and 153–155 (KIK) contribute to the substrate site. Mg(2+) is bound by residues aspartate 186, glutamate 212, and aspartate 237. Substrate is bound by residues lysine 259 and 309-311 (DLD).

Belongs to the mandelate racemase/muconate lactonizing enzyme family. Mg(2+) serves as cofactor.

Functionally, catalyzes the epimerization a variety of hydrophobic dipeptides. Epimerase activity is highest with L-Ala-L-Tyr, and lower with L-Ala-L-Met, L-Ala-L-Phe, L-Tyr-L-Ala, L-Tyr-L-Met and L-Tyr-L-Trp (in vitro). This chain is Hydrophobic dipeptide epimerase, found in Flavobacteria bacterium (strain MS024-2A).